The chain runs to 88 residues: Cytochrome c oxidase assembly factor 3, mitochondrial (88 aa).

Topologically, residues 1–32 are mitochondrial matrix; that stretch reads MGKLVGAPKGHDRYRDPKTHQITPALYRVRAP. The helical transmembrane segment at 33–55 threads the bilayer; that stretch reads FFWRNTIALFAVSSIPLAVYLYT. The Mitochondrial intermembrane segment spans residues 56 to 88; that stretch reads FKKMGDDDLGDIPIPPISDEELQKLKLEYENQK.

This sequence belongs to the COA3 family. As to quaternary structure, component of 250-400 kDa complexes called cytochrome oxidase assembly intermediates or COA complexes.

The protein localises to the mitochondrion inner membrane. Its function is as follows. Required for assembly of cytochrome c oxidase (complex IV). The polypeptide is Cytochrome c oxidase assembly factor 3, mitochondrial (COA3) (Candida albicans (strain WO-1) (Yeast)).